The following is a 286-amino-acid chain: tRNA (guanine-N(7)-)-methyltransferase (286 aa).

Residues serine 7 and serine 59 each carry the phosphoserine modification. Residues glycine 103, 126–127 (EI), 161–162 (NA), and cysteine 181 each bind S-adenosyl-L-methionine. Aspartate 184 is an active-site residue. 259 to 261 (TEE) serves as a coordination point for S-adenosyl-L-methionine.

Belongs to the class I-like SAM-binding methyltransferase superfamily. TrmB family. Forms a complex with TRM82.

The protein localises to the nucleus. The catalysed reaction is guanosine(46) in tRNA + S-adenosyl-L-methionine = N(7)-methylguanosine(46) in tRNA + S-adenosyl-L-homocysteine. The protein operates within tRNA modification; N(7)-methylguanine-tRNA biosynthesis. Methyltransferase that catalyzes the formation of N(7)-methylguanine at position 46 (m7G46) in tRNA, a modification required to maintain stability of tRNAs; its absence resulting in tRNA decay. Both the D-stem and T-stem structures of tRNAs are required for efficient methyltransferase activity. The sequence is that of tRNA (guanine-N(7)-)-methyltransferase from Saccharomyces cerevisiae (strain YJM789) (Baker's yeast).